A 120-amino-acid polypeptide reads, in one-letter code: NAD(P)H-quinone oxidoreductase subunit 3, chloroplastic (120 aa).

Helical transmembrane passes span 9–29 (IFWA…LISG), 64–84 (MFAL…PWAM), and 88–108 (VLGV…IVGS).

The protein belongs to the complex I subunit 3 family. In terms of assembly, NDH is composed of at least 16 different subunits, 5 of which are encoded in the nucleus.

The protein localises to the plastid. Its subcellular location is the chloroplast thylakoid membrane. The catalysed reaction is a plastoquinone + NADH + (n+1) H(+)(in) = a plastoquinol + NAD(+) + n H(+)(out). The enzyme catalyses a plastoquinone + NADPH + (n+1) H(+)(in) = a plastoquinol + NADP(+) + n H(+)(out). In terms of biological role, NDH shuttles electrons from NAD(P)H:plastoquinone, via FMN and iron-sulfur (Fe-S) centers, to quinones in the photosynthetic chain and possibly in a chloroplast respiratory chain. The immediate electron acceptor for the enzyme in this species is believed to be plastoquinone. Couples the redox reaction to proton translocation, and thus conserves the redox energy in a proton gradient. In Amborella trichopoda, this protein is NAD(P)H-quinone oxidoreductase subunit 3, chloroplastic.